We begin with the raw amino-acid sequence, 224 residues long: Casparian strip membrane protein 3 (224 aa).

The tract at residues 1-30 is disordered; it reads MESKKEGVASAPTSPESRRTRSNGKGKTIA. Over 1-57 the chain is Cytoplasmic; that stretch reads MESKKEGVASAPTSPESRRTRSNGKGKTIAEATPPSVTVVSTKVTPSPRGGWRKGAA. Residues 58-78 form a helical membrane-spanning segment; that stretch reads ILDFILRLGAISSAIGAAAVM. At 79–105 the chain is on the extracellular side; sequence GNNEQILPFFTQFFQFHVQWDDFPMFQ. Residues 106–126 form a helical membrane-spanning segment; that stretch reads FFVFANGAAVVFLILSLPFSI. Over 127–138 the chain is Cytoplasmic; sequence VCIVRPFAVGPR. The chain crosses the membrane as a helical span at residues 139–159; the sequence is LLLVIVDIFAMALVIAAASAA. Residues 160-191 lie on the Extracellular side of the membrane; the sequence is AAVVYLAHNGSQDANWIAICQQYTDFCQVTSQ. N168 carries an N-linked (GlcNAc...) asparagine glycan. A helical membrane pass occupies residues 192–212; it reads AVVASFVAAVFLICLIVLSSV. The Cytoplasmic portion of the chain corresponds to 213–224; it reads ALKKGLKREFGW.

Belongs to the Casparian strip membrane proteins (CASP) family. As to quaternary structure, homodimer and heterodimers.

Its subcellular location is the cell membrane. Its function is as follows. Regulates membrane-cell wall junctions and localized cell wall deposition. Required for establishment of the Casparian strip membrane domain (CSD) and the subsequent formation of Casparian strips, a cell wall modification of the root endodermis that determines an apoplastic barrier between the intraorganismal apoplasm and the extraorganismal apoplasm and prevents lateral diffusion. The chain is Casparian strip membrane protein 3 from Vigna unguiculata (Cowpea).